Consider the following 397-residue polypeptide: 2-deoxy-scyllo-inosose synthase (397 aa).

NAD(+) is bound by residues aspartate 41, 71–74, 103–107, 127–128, 138–140, and 149–150; these read EPYK, GVIGN, TS, SLK, and KN. Lysine 140 is an active-site residue. Glutamate 182 serves as a coordination point for Co(2+). Glutamate 242 is an active-site residue. Residues histidine 245 and histidine 261 each contribute to the Co(2+) site.

Belongs to the sugar phosphate cyclases superfamily. DOI synthase family. The cofactor is NAD(+). Co(2+) serves as cofactor.

The catalysed reaction is D-glucose 6-phosphate = 2-deoxy-L-scyllo-inosose + phosphate. Its pathway is metabolic intermediate biosynthesis; 2-deoxystreptamine biosynthesis; 2-deoxystreptamine from D-glucose 6-phosphate: step 1/4. The protein operates within antibiotic biosynthesis; gentamicin biosynthesis. Functionally, catalyzes the intramolecular carbocycle formation from D-glucose-6-phosphate to 2-deoxy-scyllo-inosose (DOI). This is 2-deoxy-scyllo-inosose synthase (gtmA) from Micromonospora echinospora (Micromonospora purpurea).